A 374-amino-acid polypeptide reads, in one-letter code: Chaperone protein DnaJ (374 aa).

Residues 5–70 (DYYEVLGVNR…RKRASYDQFG (66 aa)) enclose the J domain. A CR-type zinc finger spans residues 133–210 (GLSRTIKVPT…CHGQGRQQQT (78 aa)). Positions 146, 149, 162, 165, 184, 187, 198, and 201 each coordinate Zn(2+). 4 CXXCXGXG motif repeats span residues 146–153 (CKTCNGSG), 162–169 (CPRCNGSG), 184–191 (CSVCRGRG), and 198–205 (CTDCHGQG).

The protein belongs to the DnaJ family. In terms of assembly, homodimer. Zn(2+) serves as cofactor.

It is found in the cytoplasm. In terms of biological role, participates actively in the response to hyperosmotic and heat shock by preventing the aggregation of stress-denatured proteins and by disaggregating proteins, also in an autonomous, DnaK-independent fashion. Unfolded proteins bind initially to DnaJ; upon interaction with the DnaJ-bound protein, DnaK hydrolyzes its bound ATP, resulting in the formation of a stable complex. GrpE releases ADP from DnaK; ATP binding to DnaK triggers the release of the substrate protein, thus completing the reaction cycle. Several rounds of ATP-dependent interactions between DnaJ, DnaK and GrpE are required for fully efficient folding. Also involved, together with DnaK and GrpE, in the DNA replication of plasmids through activation of initiation proteins. The sequence is that of Chaperone protein DnaJ from Coxiella burnetii (strain CbuG_Q212) (Coxiella burnetii (strain Q212)).